A 328-amino-acid polypeptide reads, in one-letter code: Gonadotropin-releasing hormone receptor (328 aa).

Topologically, residues 1–38 are extracellular; that stretch reads MANSDSPEQNENHCSAINSSIPLTPGSLPTLTLSGKIR. Asn-18 carries N-linked (GlcNAc...) asparagine glycosylation. A helical membrane pass occupies residues 39–58; that stretch reads VTVTFFLFLLSTIFNTSFLL. Residues 59-77 lie on the Cytoplasmic side of the membrane; that stretch reads KLQNWTQRKEKRKKLSRMK. A helical transmembrane segment spans residues 78 to 97; sequence LLLKHLTLANLLETLIVMPL. The Extracellular portion of the chain corresponds to 98–115; that stretch reads DGMWNITVQWYAGELLCK. Asn-102 carries an N-linked (GlcNAc...) asparagine glycan. The cysteines at positions 114 and 196 are disulfide-linked. Residues 116-137 traverse the membrane as a helical segment; sequence VLSYLKLFSMYAPAFMMVVISL. The Cytoplasmic segment spans residues 138–164; the sequence is DRSLAITKPLAVKSNSKLGQFMIGLAW. The chain crosses the membrane as a helical span at residues 165 to 184; the sequence is LLSSIFAGPQLYIFGMIHLA. The Extracellular portion of the chain corresponds to 185–212; the sequence is DDSGQTEGFSQCVTHCSFPQWWHQAFYN. The chain crosses the membrane as a helical span at residues 213–232; it reads FFTFSCLFIIPLLIMVICNA. The Cytoplasmic segment spans residues 233–281; the sequence is KIIFTLTRVLHQDPHKLQLNQSKNNIPRARLRTLKMTVAFATSFTVCWT. A helical transmembrane segment spans residues 282–300; sequence PYYVLGIWYWFDPDMVNRV. Residues 301-306 are Extracellular-facing; it reads SDPVNH. A helical membrane pass occupies residues 307–326; sequence FFFLFAFLNPCFDPLIYGYF. Topologically, residues 327–328 are cytoplasmic; that stretch reads SL.

Belongs to the G-protein coupled receptor 1 family.

The protein resides in the cell membrane. Receptor for gonadotropin releasing hormone (GnRH) that mediates the action of GnRH to stimulate the secretion of the gonadotropic hormones luteinizing hormone (LH) and follicle-stimulating hormone (FSH). This receptor mediates its action by association with G-proteins that activate a phosphatidylinositol-calcium second messenger system. The chain is Gonadotropin-releasing hormone receptor (GNRHR) from Bos taurus (Bovine).